The following is a 949-amino-acid chain: General transcription factor II-I repeat domain-containing protein 2B (949 aa).

GTF2I-like repeat units follow at residues 98–192 and 323–417; these read QVHS…QLGG and LSSI…SNVG.

It belongs to the TFII-I family. Ubiquitous.

The protein resides in the nucleus. In Homo sapiens (Human), this protein is General transcription factor II-I repeat domain-containing protein 2B (GTF2IRD2B).